The following is a 243-amino-acid chain: Anti-H(O) lectin 2 (243 aa).

Asn-115 carries an N-linked (GlcNAc...) asparagine glycan. The Mn(2+) site is built by Glu-127 and Asp-129. Asp-129, Asn-136, and Asp-139 together coordinate Ca(2+). 2 residues coordinate Mn(2+): Asp-139 and His-144.

It belongs to the leguminous lectin family. In terms of assembly, homodimer.

Functionally, lactose- or galactose-binding anti-H(O) lectin. The sequence is that of Anti-H(O) lectin 2 from Cytisophyllum sessilifolium (Sessile-leaved cytisus).